A 333-amino-acid chain; its full sequence is Glycerol-3-phosphate dehydrogenase [NAD(P)+] (333 aa).

NADPH-binding residues include S10, W11, H31, R32, and K105. 3 residues coordinate sn-glycerol 3-phosphate: K105, G136, and S138. A140 lines the NADPH pocket. Residues K191, D244, S254, R255, and N256 each coordinate sn-glycerol 3-phosphate. Catalysis depends on K191, which acts as the Proton acceptor. R255 contacts NADPH. V279 and E281 together coordinate NADPH.

Belongs to the NAD-dependent glycerol-3-phosphate dehydrogenase family.

It localises to the cytoplasm. It carries out the reaction sn-glycerol 3-phosphate + NAD(+) = dihydroxyacetone phosphate + NADH + H(+). The enzyme catalyses sn-glycerol 3-phosphate + NADP(+) = dihydroxyacetone phosphate + NADPH + H(+). It participates in membrane lipid metabolism; glycerophospholipid metabolism. Functionally, catalyzes the reduction of the glycolytic intermediate dihydroxyacetone phosphate (DHAP) to sn-glycerol 3-phosphate (G3P), the key precursor for phospholipid synthesis. The chain is Glycerol-3-phosphate dehydrogenase [NAD(P)+] from Chlorobium phaeobacteroides (strain DSM 266 / SMG 266 / 2430).